A 202-amino-acid chain; its full sequence is CASP-like protein 2B1 (202 aa).

Residues 1 to 29 (MSYLGVGVSPGNVPVYHGSNLKVIDKRVR) are Cytoplasmic-facing. Residues 30–50 (LAELVLRCLICGLGVLAAVLV) form a helical membrane-spanning segment. The Extracellular portion of the chain corresponds to 51–72 (GTDTQVKEIFSIQKKARFTDMK). Residues 73–93 (ALVFLVIANGIAAAYSLLQGV) traverse the membrane as a helical segment. The Cytoplasmic portion of the chain corresponds to 94-109 (RCVVGMVRGSALFSKP). The helical transmembrane segment at 110–130 (LAWAIFSGDQMMAYLTVAAVA) threads the bilayer. The Extracellular portion of the chain corresponds to 131-164 (AAAQSAVFAKLGQPELQWMKICNMYGKFCNQVGE). A helical membrane pass occupies residues 165-185 (GIASALLVSVSMVVLSCISAF). Residues 186–202 (SLFRLYGANKGKDCTRW) are Cytoplasmic-facing.

The protein belongs to the Casparian strip membrane proteins (CASP) family. In terms of assembly, homodimer and heterodimers.

Its subcellular location is the cell membrane. This chain is CASP-like protein 2B1, found in Ricinus communis (Castor bean).